Reading from the N-terminus, the 3080-residue chain is Adhesion G-protein coupled receptor G4 (3080 aa).

The first 27 residues, 1-27, serve as a signal peptide directing secretion; it reads MKEHIIYQKLYGLILMSSFIFLSDTLS. Over 28–2740 the chain is Extracellular; it reads LKGKKLDFFG…SRSTVDSVNE (2713 aa). Positions 29 to 228 constitute a Pentraxin (PTX) domain; the sequence is KGKKLDFFGR…IPTVDRTLRC (200 aa). 2 disulfides stabilise this stretch: C58–C123 and C200–C228. D202 lines the Mg(2+) pocket. N233, N487, N836, and N899 each carry an N-linked (GlcNAc...) asparagine glycan. Polar residues predominate over residues 946–959; sequence SEGISAGSPTSGST. The disordered stretch occupies residues 946–965; sequence SEGISAGSPTSGSTHIFGEP. A glycan (N-linked (GlcNAc...) asparagine) is linked at N1020. A disordered region spans residues 1274-1348; it reads VTEMSPSKNS…ITPTLTSSNT (75 aa). Polar residues-rich tracts occupy residues 1277-1296, 1305-1315, and 1324-1348; these read MSPS…SLEM, TKISSHQTHSP, and SDGN…SSNT. N-linked (GlcNAc...) asparagine glycosylation is present at N1519. The segment covering 2109–2139 has biased composition (polar residues); sequence SRTTITANPRTVSHPSSFSRKTMSPSTTDHT. The tract at residues 2109 to 2141 is disordered; it reads SRTTITANPRTVSHPSSFSRKTMSPSTTDHTLS. Residues N2361 and N2640 are each glycosylated (N-linked (GlcNAc...) asparagine). The GAIN-B domain occupies 2578–2734; that stretch reads MAFSIHSYEE…GVLMDLSRST (157 aa). Disulfide bonds link C2685/C2716 and C2704/C2718. The tract at residues 2685-2734 is GPS; sequence CAFWDFENNNGLGGWNSSGCKVKETNVNYTICQCDHLTHFGVLMDLSRST. The segment at 2723-2734 is stachel; it reads HFGVLMDLSRST. A helical transmembrane segment spans residues 2741–2766; sequence QILALITYTGCGISSIFLGVAVVTYI. Topologically, residues 2767–2777 are cytoplasmic; it reads AFHKLRKDYPA. Residues 2778–2800 form a helical membrane-spanning segment; it reads KILINLCTALLMLNLVFLINSWL. The Extracellular portion of the chain corresponds to 2801–2806; sequence SSFQKV. Residues 2807–2835 traverse the membrane as a helical segment; sequence GVCITAAVALHYFLLVSFTWMGLEAVHMY. An intrachain disulfide couples C2809 to C2886. The Cytoplasmic portion of the chain corresponds to 2836–2849; sequence LALVKVFNIYIPNY. A helical membrane pass occupies residues 2850–2870; the sequence is ILKFCLVGWGIPAIMVAITVS. Residues 2871-2892 are Extracellular-facing; that stretch reads VKKDLYGTLSPTTPFCWIKDDS. The helical transmembrane segment at 2893-2918 threads the bilayer; the sequence is IFYISVVAYFCLIFLMNLSMFCTVLV. Residues 2919 to 2937 are Cytoplasmic-facing; it reads QLNSVKSQIQKTRRKMILH. The helical transmembrane segment at 2938 to 2961 threads the bilayer; it reads DLKGTMSLTFLLGLTWGFAFFAWG. Over 2962-2965 the chain is Extracellular; sequence PMRN. A helical transmembrane segment spans residues 2966–2989; sequence FFLYLFAIFNTLQGFFIFVFHCVM. Residues 2990-3080 are Cytoplasmic-facing; the sequence is KESVREQWQI…FDKDPYCSSP (91 aa). Polar residues predominate over residues 3051–3065; sequence FKSLGSAQGTPSEIS. Positions 3051 to 3080 are disordered; that stretch reads FKSLGSAQGTPSEISFPNDDFDKDPYCSSP.

It belongs to the G-protein coupled receptor 2 family. Adhesion G-protein coupled receptor (ADGR) subfamily. In terms of assembly, homodimer; homodimerizes via its Pentraxin domain in a calcium-independent manner. Heterodimer of 2 chains generated by proteolytic processing; the large extracellular N-terminal fragment and the membrane-bound C-terminal fragment predominantly remain associated and non-covalently linked. Post-translationally, autoproteolytically processed at the GPS region of the GAIN-B domain; this cleavage modulates receptor activity. N-glycosylated. In terms of tissue distribution, detected in fetal retina. Highly expressed in normal enterochromaffin cells and in neuroendocrine carcinoma. Detected in normal liver; highly expressed in primary liver carcinoma.

Its subcellular location is the membrane. Its activity is regulated as follows. Forms a heterodimer of 2 chains generated by proteolytic processing that remain associated through non-covalent interactions mediated by the GAIN-B domain. In the inactivated receptor, the Stachel sequence (also named stalk) is embedded in the GAIN-B domain, where it adopts a beta-strand conformation. On activation, the Stachel moves into the 7 transmembrane region and adopts a twisted hook-shaped configuration that forms contacts within the receptor, leading to coupling of a G-alpha protein, which activates signaling. The cleaved GAIN-B and N-terminal domains can then dissociate from the rest of the receptor. Its function is as follows. Orphan adhesion G-protein coupled receptor (aGPCR). Ligand binding causes a conformation change that triggers signaling via guanine nucleotide-binding proteins (G proteins) and modulates the activity of downstream effectors, such as adenylate cyclase. ADGRG4 is coupled to G(s) G proteins and mediates activation of adenylate cyclase activity. May be act as sensor of mechanical forces. This is Adhesion G-protein coupled receptor G4 from Homo sapiens (Human).